We begin with the raw amino-acid sequence, 219 residues long: Proteasome subunit beta (219 aa).

The propeptide at 1 to 14 (MISGSEYHKEYMKG) is removed in mature form; by autocatalysis. Catalysis depends on Thr15, which acts as the Nucleophile.

This sequence belongs to the peptidase T1B family. In terms of assembly, the 20S proteasome core is composed of 14 alpha and 14 beta subunits that assemble into four stacked heptameric rings, resulting in a barrel-shaped structure. The two inner rings, each composed of seven catalytic beta subunits, are sandwiched by two outer rings, each composed of seven alpha subunits. The catalytic chamber with the active sites is on the inside of the barrel. Has a gated structure, the ends of the cylinder being occluded by the N-termini of the alpha-subunits. Is capped at one or both ends by the proteasome regulatory ATPase, PAN.

The protein resides in the cytoplasm. The enzyme catalyses Cleavage of peptide bonds with very broad specificity.. Its activity is regulated as follows. The formation of the proteasomal ATPase PAN-20S proteasome complex, via the docking of the C-termini of PAN into the intersubunit pockets in the alpha-rings, triggers opening of the gate for substrate entry. Interconversion between the open-gate and close-gate conformations leads to a dynamic regulation of the 20S proteasome proteolysis activity. Its function is as follows. Component of the proteasome core, a large protease complex with broad specificity involved in protein degradation. This Methanococcus vannielii (strain ATCC 35089 / DSM 1224 / JCM 13029 / OCM 148 / SB) protein is Proteasome subunit beta.